The primary structure comprises 462 residues: ATP-dependent protease ATPase subunit HslU (462 aa).

Residues Ile21, 63-68 (GVGKTE), Asp275, Glu340, and Arg412 each bind ATP.

The protein belongs to the ClpX chaperone family. HslU subfamily. In terms of assembly, a double ring-shaped homohexamer of HslV is capped on each side by a ring-shaped HslU homohexamer. The assembly of the HslU/HslV complex is dependent on binding of ATP.

It is found in the cytoplasm. ATPase subunit of a proteasome-like degradation complex; this subunit has chaperone activity. The binding of ATP and its subsequent hydrolysis by HslU are essential for unfolding of protein substrates subsequently hydrolyzed by HslV. HslU recognizes the N-terminal part of its protein substrates and unfolds these before they are guided to HslV for hydrolysis. The polypeptide is ATP-dependent protease ATPase subunit HslU (Pseudothermotoga lettingae (strain ATCC BAA-301 / DSM 14385 / NBRC 107922 / TMO) (Thermotoga lettingae)).